The following is a 509-amino-acid chain: Tyrosine-protein kinase STK (509 aa).

The segment covering 1 to 16 (MGPCCSKQTKALNNQP) has biased composition (polar residues). A disordered region spans residues 1–23 (MGPCCSKQTKALNNQPDKSKSKD). The N-myristoyl glycine moiety is linked to residue Gly-2. Residues 59–120 (PGVTIFVALY…PSTYVAPEKS (62 aa)) enclose the SH3 domain. An SH2 domain is found at 126 to 218 (WYFGDVKRAE…GLVCALTLPC (93 aa)). Residues 240-495 (LRLNRKLGAG…LQGVLEDYFV (256 aa)) form the Protein kinase domain. ATP contacts are provided by residues 246-254 (LGAGQFGEV) and Lys-268. Asp-360 (proton acceptor) is an active-site residue. Position 390 is a phosphotyrosine; by autocatalysis (Tyr-390).

The protein belongs to the protein kinase superfamily. Tyr protein kinase family. SRC subfamily.

The enzyme catalyses L-tyrosyl-[protein] + ATP = O-phospho-L-tyrosyl-[protein] + ADP + H(+). This Hydra vulgaris (Hydra) protein is Tyrosine-protein kinase STK (STK).